Reading from the N-terminus, the 88-residue chain is Protein K3 (88 aa).

Residues leucine 8–lysine 82 enclose the S1 motif domain. Binding to host EIF2AK2/PKR regions lie at residues serine 43 to glutamate 53 and lysine 74 to valine 79.

Belongs to the orthopoxvirus OPG041 family. As to quaternary structure, interacts with host EIF2AK2/PKR kinase.

In terms of biological role, viral mimic of eIF-2-alpha that acts as a pseudosubstrate for EIF2AK2/PKR kinase. Inhibits therefore eIF-2-alpha phosphorylation by host EIF2AK2/PKR kinase and prevents protein synthesis shutoff. Determinant of host species specificity. In Homo sapiens (Human), this protein is Protein K3 (OPG041).